The chain runs to 381 residues: Alkanesulfonate monooxygenase (381 aa).

This sequence belongs to the SsuD family. Homotetramer.

It carries out the reaction an alkanesulfonate + FMNH2 + O2 = an aldehyde + FMN + sulfite + H2O + 2 H(+). In terms of biological role, catalyzes the desulfonation of aliphatic sulfonates. This chain is Alkanesulfonate monooxygenase, found in Escherichia coli O157:H7.